The sequence spans 636 residues: ATP-dependent zinc metalloprotease FtsH 1 (636 aa).

Residues 1-18 (MKLSPPKKNLPPQKNNEP) lie on the Cytoplasmic side of the membrane. Residues 19–39 (PFPYLRLLVQVGIALFLVWIW) form a helical membrane-spanning segment. Over 40 to 126 (QESLHKATVS…YGSVKPSLLS (87 aa)) the chain is Periplasmic. Residues 127–147 (QILFSWVVPILIFFLVWFALA) form a helical membrane-spanning segment. The Cytoplasmic portion of the chain corresponds to 148-636 (RFMGGGGAGY…KEAPSYSSTL (489 aa)). 220 to 227 (GPPGTGKT) contacts ATP. Histidine 442 lines the Zn(2+) pocket. Glutamate 443 is a catalytic residue. Zn(2+) is bound by residues histidine 446 and aspartate 519.

It in the central section; belongs to the AAA ATPase family. In the C-terminal section; belongs to the peptidase M41 family. Homohexamer. Zn(2+) serves as cofactor.

It is found in the cell inner membrane. Functionally, acts as a processive, ATP-dependent zinc metallopeptidase for both cytoplasmic and membrane proteins. Plays a role in the quality control of integral membrane proteins. This chain is ATP-dependent zinc metalloprotease FtsH 1, found in Methylacidiphilum infernorum (isolate V4) (Methylokorus infernorum (strain V4)).